The primary structure comprises 278 residues: Pantothenate synthetase (278 aa).

Position 26-33 (26-33 (MGNLHEGH)) interacts with ATP. The active-site Proton donor is the histidine 33. Residue glutamine 57 participates in (R)-pantoate binding. Position 57 (glutamine 57) interacts with beta-alanine. 144–147 (GKKD) is a binding site for ATP. Position 150 (glutamine 150) interacts with (R)-pantoate. ATP-binding positions include glycine 173 and 181 to 184 (LSSR).

It belongs to the pantothenate synthetase family. As to quaternary structure, homodimer.

The protein localises to the cytoplasm. It carries out the reaction (R)-pantoate + beta-alanine + ATP = (R)-pantothenate + AMP + diphosphate + H(+). It participates in cofactor biosynthesis; (R)-pantothenate biosynthesis; (R)-pantothenate from (R)-pantoate and beta-alanine: step 1/1. Its function is as follows. Catalyzes the condensation of pantoate with beta-alanine in an ATP-dependent reaction via a pantoyl-adenylate intermediate. This is Pantothenate synthetase from Neisseria meningitidis serogroup C / serotype 2a (strain ATCC 700532 / DSM 15464 / FAM18).